We begin with the raw amino-acid sequence, 355 residues long: UDP-N-acetylglucosamine--N-acetylmuramyl-(pentapeptide) pyrophosphoryl-undecaprenol N-acetylglucosamine transferase (355 aa).

UDP-N-acetyl-alpha-D-glucosamine is bound by residues 15–17, N127, R163, S191, I244, 263–268, and Q288; these read TGG and ALTVSE.

This sequence belongs to the glycosyltransferase 28 family. MurG subfamily.

The protein resides in the cell inner membrane. The catalysed reaction is di-trans,octa-cis-undecaprenyl diphospho-N-acetyl-alpha-D-muramoyl-L-alanyl-D-glutamyl-meso-2,6-diaminopimeloyl-D-alanyl-D-alanine + UDP-N-acetyl-alpha-D-glucosamine = di-trans,octa-cis-undecaprenyl diphospho-[N-acetyl-alpha-D-glucosaminyl-(1-&gt;4)]-N-acetyl-alpha-D-muramoyl-L-alanyl-D-glutamyl-meso-2,6-diaminopimeloyl-D-alanyl-D-alanine + UDP + H(+). It functions in the pathway cell wall biogenesis; peptidoglycan biosynthesis. Functionally, cell wall formation. Catalyzes the transfer of a GlcNAc subunit on undecaprenyl-pyrophosphoryl-MurNAc-pentapeptide (lipid intermediate I) to form undecaprenyl-pyrophosphoryl-MurNAc-(pentapeptide)GlcNAc (lipid intermediate II). This chain is UDP-N-acetylglucosamine--N-acetylmuramyl-(pentapeptide) pyrophosphoryl-undecaprenol N-acetylglucosamine transferase, found in Escherichia coli O45:K1 (strain S88 / ExPEC).